Reading from the N-terminus, the 213-residue chain is Uridine kinase (213 aa).

14–21 serves as a coordination point for ATP; it reads GASASGKS.

Belongs to the uridine kinase family.

Its subcellular location is the cytoplasm. The catalysed reaction is uridine + ATP = UMP + ADP + H(+). It catalyses the reaction cytidine + ATP = CMP + ADP + H(+). Its pathway is pyrimidine metabolism; CTP biosynthesis via salvage pathway; CTP from cytidine: step 1/3. It participates in pyrimidine metabolism; UMP biosynthesis via salvage pathway; UMP from uridine: step 1/1. The protein is Uridine kinase of Vibrio cholerae serotype O1 (strain ATCC 39315 / El Tor Inaba N16961).